Here is a 158-residue protein sequence, read N- to C-terminus: Protein hunchback (158 aa).

Positions His18–Arg34 are enriched in basic residues. Disordered stretches follow at residues His18–Ala96 and Leu118–Ala158. The span at Ala41–Pro50 shows a compositional bias: polar residues. A compositionally biased stretch (low complexity) spans Leu52–Pro65. Positions Glu139–Ala158 are enriched in basic and acidic residues.

Belongs to the hunchback C2H2-type zinc-finger protein family.

It localises to the nucleus. Its function is as follows. Gap class segmentation protein that controls development of head structures. The polypeptide is Protein hunchback (hb) (Drosophila mimica (Fruit fly)).